The sequence spans 394 residues: Flavohemoprotein (394 aa).

In terms of domain architecture, Globin spans 1 to 136 (MLSENTINIV…LANVFIQREE (136 aa)). A heme b-binding site is contributed by His-85. Catalysis depends on charge relay system residues Tyr-95 and Glu-135. Positions 147–394 (GGWRGLREFE…YECFGPHKVV (248 aa)) are reductase. The FAD-binding FR-type domain maps to 150–255 (RGLREFELVE…AAPAGDFFLD (106 aa)). FAD contacts are provided by residues Tyr-188 and 204–207 (RQYS). Position 268–273 (268–273 (GVGLTP)) interacts with NADP(+). An FAD-binding site is contributed by 387–390 (CFGP).

Belongs to the globin family. Two-domain flavohemoproteins subfamily. The protein in the C-terminal section; belongs to the flavoprotein pyridine nucleotide cytochrome reductase family. It depends on heme b as a cofactor. Requires FAD as cofactor.

It catalyses the reaction 2 nitric oxide + NADPH + 2 O2 = 2 nitrate + NADP(+) + H(+). The enzyme catalyses 2 nitric oxide + NADH + 2 O2 = 2 nitrate + NAD(+) + H(+). Functionally, is involved in NO detoxification in an aerobic process, termed nitric oxide dioxygenase (NOD) reaction that utilizes O(2) and NAD(P)H to convert NO to nitrate, which protects the bacterium from various noxious nitrogen compounds. Therefore, plays a central role in the inducible response to nitrosative stress. The protein is Flavohemoprotein of Vibrio vulnificus (strain CMCP6).